The following is a 420-amino-acid chain: ATP phosphoribosyltransferase regulatory subunit (420 aa).

Belongs to the class-II aminoacyl-tRNA synthetase family. HisZ subfamily. As to quaternary structure, heteromultimer composed of HisG and HisZ subunits.

The protein localises to the cytoplasm. Its pathway is amino-acid biosynthesis; L-histidine biosynthesis; L-histidine from 5-phospho-alpha-D-ribose 1-diphosphate: step 1/9. Functionally, required for the first step of histidine biosynthesis. May allow the feedback regulation of ATP phosphoribosyltransferase activity by histidine. This Bacillus mycoides (strain KBAB4) (Bacillus weihenstephanensis) protein is ATP phosphoribosyltransferase regulatory subunit.